The following is an 801-amino-acid chain: Leucine--tRNA ligase (801 aa).

Residues 39 to 50 carry the 'HIGH' region motif; that stretch reads PYPSGAGIHVGH. Residues 578–582 carry the 'KMSKS' region motif; the sequence is KMSKS. Lys-581 provides a ligand contact to ATP.

The protein belongs to the class-I aminoacyl-tRNA synthetase family.

It localises to the cytoplasm. The enzyme catalyses tRNA(Leu) + L-leucine + ATP = L-leucyl-tRNA(Leu) + AMP + diphosphate. This is Leucine--tRNA ligase from Mesoplasma florum (strain ATCC 33453 / NBRC 100688 / NCTC 11704 / L1) (Acholeplasma florum).